The sequence spans 270 residues: Interleukin-2 receptor subunit alpha (270 aa).

Positions 1–21 are cleaved as a signal peptide; the sequence is MEPSLLMWGFFTFTMIPGCMA. Residues 22–84 form the Sushi 1 domain; that stretch reads GACVQQPPSL…FWENKCQCMP (63 aa). Topologically, residues 22–245 are extracellular; that stretch reads GACVQQPPSL…QPIIFTTQYQ (224 aa). Disulfide bonds link Cys24–Cys67, Cys49–Cys80, and Cys51–Cys82. Asn33 and Asn70 each carry an N-linked (GlcNAc...) asparagine glycan. The disordered stretch occupies residues 87–124; it reads SPRIPVKQVTPRPEEQKERKTTETQGQMQPPNQANLPG. Positions 98–108 are enriched in basic and acidic residues; it reads RPEEQKERKTT. Positions 112 to 121 are enriched in polar residues; that stretch reads GQMQPPNQAN. The 68-residue stretch at 124–191 folds into the Sushi 2 domain; that stretch reads GHCKEPPPWE…WTQPKLKCKS (68 aa). 2 cysteine pairs are disulfide-bonded: Cys126-Cys171 and Cys153-Cys189. Asn164 and Asn195 each carry an N-linked (GlcNAc...) asparagine glycan. Positions 190–225 are disordered; sequence KSEKENGSFPEPQMSTAAPPTTKTSLPTRTKGTTDS. A compositionally biased stretch (polar residues) spans 202–225; the sequence is QMSTAAPPTTKTSLPTRTKGTTDS. Asn227 carries N-linked (GlcNAc...) asparagine glycosylation. A helical membrane pass occupies residues 246–264; it reads LAVAGCVLLLLSILLLSGL. Over 265–270 the chain is Cytoplasmic; that stretch reads TWQRRR.

In terms of assembly, non-covalent dimer of an alpha and a beta subunit. IL2R exists in 3 different forms: a high affinity dimer, an intermediate affinity monomer (beta subunit), and a low affinity monomer (alpha subunit). The high and intermediate affinity forms also associate with a gamma subunit.

Its subcellular location is the membrane. In terms of biological role, receptor for interleukin-2. The receptor is involved in the regulation of immune tolerance by controlling regulatory T cells (TREGs) activity. TREGs suppress the activation and expansion of autoreactive T-cells. The chain is Interleukin-2 receptor subunit alpha (IL2RA) from Sus scrofa (Pig).